A 367-amino-acid chain; its full sequence is Glutamate 5-kinase (367 aa).

Residue Lys-9 participates in ATP binding. Substrate is bound by residues Ser-49, Asp-136, and Asn-148. ATP is bound by residues Thr-168 to Asp-169 and Thr-210 to Lys-216. The PUA domain maps to Ser-276–Arg-350.

It belongs to the glutamate 5-kinase family.

It localises to the cytoplasm. It catalyses the reaction L-glutamate + ATP = L-glutamyl 5-phosphate + ADP. It participates in amino-acid biosynthesis; L-proline biosynthesis; L-glutamate 5-semialdehyde from L-glutamate: step 1/2. Functionally, catalyzes the transfer of a phosphate group to glutamate to form L-glutamate 5-phosphate. The chain is Glutamate 5-kinase from Bacillus cereus (strain ATCC 14579 / DSM 31 / CCUG 7414 / JCM 2152 / NBRC 15305 / NCIMB 9373 / NCTC 2599 / NRRL B-3711).